The primary structure comprises 89 residues: Small ribosomal subunit protein uS15 (89 aa).

The protein belongs to the universal ribosomal protein uS15 family. As to quaternary structure, part of the 30S ribosomal subunit. Forms a bridge to the 50S subunit in the 70S ribosome, contacting the 23S rRNA.

Its function is as follows. One of the primary rRNA binding proteins, it binds directly to 16S rRNA where it helps nucleate assembly of the platform of the 30S subunit by binding and bridging several RNA helices of the 16S rRNA. Functionally, forms an intersubunit bridge (bridge B4) with the 23S rRNA of the 50S subunit in the ribosome. This chain is Small ribosomal subunit protein uS15, found in Erwinia tasmaniensis (strain DSM 17950 / CFBP 7177 / CIP 109463 / NCPPB 4357 / Et1/99).